Consider the following 50-residue polypeptide: Gene 38 protein (50 aa).

This chain is Gene 38 protein (38), found in Mycobacterium (Mycobacteriophage D29).